A 281-amino-acid polypeptide reads, in one-letter code: 4-diphosphocytidyl-2-C-methyl-D-erythritol kinase (281 aa).

Residue Lys15 is part of the active site. 98–108 contributes to the ATP binding site; sequence PTGAGLGGGSS. Residue Asp140 is part of the active site.

It belongs to the GHMP kinase family. IspE subfamily.

The enzyme catalyses 4-CDP-2-C-methyl-D-erythritol + ATP = 4-CDP-2-C-methyl-D-erythritol 2-phosphate + ADP + H(+). Its pathway is isoprenoid biosynthesis; isopentenyl diphosphate biosynthesis via DXP pathway; isopentenyl diphosphate from 1-deoxy-D-xylulose 5-phosphate: step 3/6. Its function is as follows. Catalyzes the phosphorylation of the position 2 hydroxy group of 4-diphosphocytidyl-2C-methyl-D-erythritol. This chain is 4-diphosphocytidyl-2-C-methyl-D-erythritol kinase, found in Neisseria meningitidis serogroup A / serotype 4A (strain DSM 15465 / Z2491).